The chain runs to 364 residues: Probable protein disulfide-isomerase A6 (364 aa).

The first 28 residues, 1–28, serve as a signal peptide directing secretion; it reads MKMEMHQIWSRIALASFAFAILFVSVSA. Thioredoxin domains are found at residues 29 to 137 and 139 to 256; these read DDVV…TEGG and NVKI…EKSG. Catalysis depends on nucleophile residues Cys-58, Cys-61, Cys-177, and Cys-180. 2 disulfide bridges follow: Cys-58–Cys-61 and Cys-177–Cys-180.

This sequence belongs to the protein disulfide isomerase family.

It is found in the endoplasmic reticulum lumen. The enzyme catalyses Catalyzes the rearrangement of -S-S- bonds in proteins.. This chain is Probable protein disulfide-isomerase A6, found in Medicago sativa (Alfalfa).